The primary structure comprises 464 residues: tRNA modification GTPase MnmE (464 aa).

(6S)-5-formyl-5,6,7,8-tetrahydrofolate contacts are provided by R27, E90, and K129. In terms of domain architecture, TrmE-type G spans 222–384 (GIALVLAGSV…LYDKIRSLTC (163 aa)). Residues 232 to 237 (NVGKSS), 251 to 257 (SSYAGTT), and 276 to 279 (DTAG) each bind GTP. Mg(2+) is bound by residues S236 and T257. K464 is a binding site for (6S)-5-formyl-5,6,7,8-tetrahydrofolate.

The protein belongs to the TRAFAC class TrmE-Era-EngA-EngB-Septin-like GTPase superfamily. TrmE GTPase family. Homodimer. Heterotetramer of two MnmE and two MnmG subunits. Requires K(+) as cofactor.

Its subcellular location is the cytoplasm. Its function is as follows. Exhibits a very high intrinsic GTPase hydrolysis rate. Involved in the addition of a carboxymethylaminomethyl (cmnm) group at the wobble position (U34) of certain tRNAs, forming tRNA-cmnm(5)s(2)U34. The polypeptide is tRNA modification GTPase MnmE (Borrelia turicatae (strain 91E135)).